The sequence spans 1171 residues: ATP-dependent helicase/deoxyribonuclease subunit B (1171 aa).

In terms of domain architecture, UvrD-like helicase ATP-binding spans 1–343; sequence MSLRFVIGRA…LVADENYRYR (343 aa). 8–15 serves as a coordination point for ATP; that stretch reads GRAGSGKS. The region spanning 281-587 is the UvrD-like helicase C-terminal domain; the sequence is MEQPRFHSPA…QFANIPPSLD (307 aa). Positions 805, 1129, 1132, and 1138 each coordinate [4Fe-4S] cluster.

The protein belongs to the helicase family. AddB/RexB type 1 subfamily. As to quaternary structure, heterodimer of AddA and AddB. Requires Mg(2+) as cofactor. [4Fe-4S] cluster serves as cofactor.

The heterodimer acts as both an ATP-dependent DNA helicase and an ATP-dependent, dual-direction single-stranded exonuclease. Recognizes the chi site generating a DNA molecule suitable for the initiation of homologous recombination. The AddB subunit has 5' -&gt; 3' nuclease activity but not helicase activity. This chain is ATP-dependent helicase/deoxyribonuclease subunit B, found in Bacillus cereus (strain AH187).